The primary structure comprises 146 residues: Meiotically up-regulated gene 96 protein (146 aa).

The chain crosses the membrane as a helical span at residues 85-104 (LIRYSLILTCLVAILLSVLW).

It is found in the cytoplasm. It localises to the membrane. Functionally, has a role in meiosis. This is Meiotically up-regulated gene 96 protein (mug96) from Schizosaccharomyces pombe (strain 972 / ATCC 24843) (Fission yeast).